A 259-amino-acid chain; its full sequence is Tubulin-specific chaperone C (259 aa).

Positions 112-241 (PEVYFENDTL…DEHPILDFTW (130 aa)) constitute a C-CAP/cofactor C-like domain.

This sequence belongs to the TBCC family.

Its subcellular location is the cytoplasm. It is found in the cytoskeleton. Functionally, tubulin-folding protein; involved in the final step of the tubulin folding pathway. The chain is Tubulin-specific chaperone C (cin2) from Schizosaccharomyces pombe (strain 972 / ATCC 24843) (Fission yeast).